The following is a 400-amino-acid chain: Dual specificity mitogen-activated protein kinase kinase 2 (400 aa).

Position 1 is an N-acetylmethionine (Met1). Ser23 carries the phosphoserine modification. The Protein kinase domain maps to 72–369 (FERISELGAG…LKMLTNHTFI (298 aa)). Residues 78 to 86 (LGAGNGGVV) and Lys101 each bind ATP. Asp194 serves as the catalytic Proton acceptor. (Microbial infection) O-acetylserine; by Yersinia YopJ; alternate is present on residues Ser222 and Ser226. The residue at position 222 (Ser222) is a Phosphoserine; by RAF; alternate. Residue Ser226 is modified to Phosphoserine; alternate. The segment at 286-310 (GEEGEPHSISPRPRPPGRPVSGHGM) is disordered. Residues Ser293, Ser295, and Ser306 each carry the phosphoserine modification. A phosphothreonine mark is found at Thr394 and Thr396.

Belongs to the protein kinase superfamily. STE Ser/Thr protein kinase family. MAP kinase kinase subfamily. As to quaternary structure, interacts with MORG1. Interacts with SGK1. Interacts with KSR1. Interacts with KSR1 and BRAF; the interaction with KSR1 mediates KSR1-BRAF dimerization. Interacts with GLS. Mg(2+) is required as a cofactor. In terms of processing, MAPKK is itself dependent on Ser/Thr phosphorylation for activity catalyzed by MAP kinase kinase kinases (RAF or MEKK1). Phosphorylated by MAP2K1/MEK1. (Microbial infection) Acetylation of Ser-222 and Ser-226 by Yersinia YopJ prevents phosphorylation and activation, thus blocking the MAPK signaling pathway.

The protein localises to the cytoplasm. It localises to the membrane. The catalysed reaction is L-seryl-[protein] + ATP = O-phospho-L-seryl-[protein] + ADP + H(+). The enzyme catalyses L-threonyl-[protein] + ATP = O-phospho-L-threonyl-[protein] + ADP + H(+). It carries out the reaction L-tyrosyl-[protein] + ATP = O-phospho-L-tyrosyl-[protein] + ADP + H(+). Catalyzes the concomitant phosphorylation of a threonine and a tyrosine residue in a Thr-Glu-Tyr sequence located in MAP kinases. Activates the ERK1 and ERK2 MAP kinases. Activates BRAF in a KSR1 or KSR2-dependent manner; by binding to KSR1 or KSR2 releases the inhibitory intramolecular interaction between KSR1 or KSR2 protein kinase and N-terminal domains which promotes KSR1 or KSR2-BRAF dimerization and BRAF activation. This Homo sapiens (Human) protein is Dual specificity mitogen-activated protein kinase kinase 2 (MAP2K2).